A 546-amino-acid polypeptide reads, in one-letter code: uncharacterized protein (546 aa).

The protein belongs to the IIV-6 098R family.

This is an uncharacterized protein from Aedes vexans (Inland floodwater mosquito).